The sequence spans 125 residues: Probable growth factor FPV211 (125 aa).

The N-terminal stretch at 1-48 is a signal peptide; the sequence is MKEPLIEVKREYNLIKTLTGKKFVVSTSIVVVLLIINMIFYGIRIHEL. The 41-residue stretch at 80-120 folds into the EGF-like domain; sequence LFEKCKSKFNNFCIYGECMNIINLDKKFCICNKGYTGNRCD. 3 disulfide bridges follow: cysteine 84–cysteine 97, cysteine 92–cysteine 108, and cysteine 110–cysteine 119.

The protein resides in the secreted. The protein is Probable growth factor FPV211 of Vertebrata (FPV).